The sequence spans 497 residues: Aldehyde dehydrogenase (497 aa).

241 to 246 (GSTLVG) contacts NAD(+). The active-site Proton acceptor is Glu-264. Cys-298 serves as the catalytic Nucleophile.

The protein belongs to the aldehyde dehydrogenase family.

It carries out the reaction an aldehyde + NAD(+) + H2O = a carboxylate + NADH + 2 H(+). The protein operates within alcohol metabolism; ethanol degradation; acetate from ethanol: step 2/2. The protein is Aldehyde dehydrogenase (aldA) of Emericella nidulans (strain FGSC A4 / ATCC 38163 / CBS 112.46 / NRRL 194 / M139) (Aspergillus nidulans).